A 714-amino-acid chain; its full sequence is Protein HAPLESS 2-B (714 aa).

The first 33 residues, 1 to 33 (MAPRRRRRAARSSRPLLLALLAAAVNNFAPAGG), serve as a signal peptide directing secretion. At 34 to 552 (VEVLAKSRLE…FFTGTTCSTR (519 aa)) the chain is on the extracellular side. Cystine bridges form between C45/C59, C134/C164, C146/C194, C165/C321, C167/C177, C304/C328, and C441/C479. A helical membrane pass occupies residues 553-573 (CWSFLKFVIHGLLLVAVLWLL). At 574–714 (HRKGLFDPLY…HGDRRHHAWH (141 aa)) the chain is on the cytoplasmic side. Residues 597–619 (RARRRHKRAHSHRHSHHHDAHKR) form a disordered region. A compositionally biased stretch (basic residues) spans 598 to 619 (ARRRHKRAHSHRHSHHHDAHKR).

It belongs to the HAP2/GCS1 family.

It localises to the endoplasmic reticulum membrane. It is found in the cell membrane. Functionally, required for male fertility. Plays a role in pollen tube guidance and successful gamete attachment. Essential for the fusion of gametes during double fertilization, where one male gamete fuses with the egg to produce a zygote, and another male gamete fuses with the central cell to produce the endosperm. Mediates the fusion of cell membranes. Not required for pollen tube outgrowth. The sequence is that of Protein HAPLESS 2-B (HAP2B) from Oryza sativa subsp. japonica (Rice).